We begin with the raw amino-acid sequence, 387 residues long: Patatin group A-2 (387 aa).

An N-terminal signal peptide occupies residues 1-23; it reads MATTKSFLILIVMILATTSSTFA. The PNPLA domain occupies 32 to 230; it reads LSIDGGGIKG…TVADPALLSV (199 aa). The short motif at 36 to 41 is the GXGXXG element; the sequence is GGGIKG. The short motif at 75-79 is the GXSXG element; the sequence is GTSTG. The active-site Nucleophile is the S77. N115 carries N-linked (GlcNAc...) asparagine glycosylation. D216 (proton acceptor) is an active-site residue. Residues 216 to 218 carry the DGA/G motif; sequence DGA. Positions 361-385 form a coiled coil; sequence ETYEEALKRFAKLLSDRKKLRANKA.

The protein belongs to the patatin family. Tuber and stolon.

Its subcellular location is the vacuole. Functionally, probable lipolytic acyl hydrolase (LAH), an activity which is thought to be involved in the response of tubers to pathogens. This is Patatin group A-2 from Solanum tuberosum (Potato).